A 365-amino-acid polypeptide reads, in one-letter code: Serine protease 40 (365 aa).

The N-terminal stretch at 1–34 (MCGIRAKKSGLGGYGAGLLAALLGVSFLSQHAQT) is a signal peptide. A glycan (N-linked (GlcNAc...) asparagine) is linked at asparagine 44. A Peptidase S1 domain is found at 69-313 (IYGGQIAGAE…FDKWIKDNKK (245 aa)). Cysteine 94 and cysteine 110 are oxidised to a cystine. Active-site charge relay system residues include histidine 109 and aspartate 159. 3 cysteine pairs are disulfide-bonded: cysteine 193–cysteine 270, cysteine 226–cysteine 249, and cysteine 260–cysteine 288. Serine 264 acts as the Charge relay system in catalysis. The disordered stretch occupies residues 312–343 (KKSSSNSKPGESPHHPGSPENENPEGDNKNQG).

The protein belongs to the peptidase S1 family. As to expression, expressed in testis. More specifically, abundantly expressed in the haploid round spermatid.

The protein localises to the cytoplasmic vesicle. It is found in the secretory vesicle. The protein resides in the acrosome. It localises to the secreted. May play an important role in the sperm/egg interaction; released during the acrosome reaction. The sequence is that of Serine protease 40 (Prss40) from Mus musculus (Mouse).